The following is a 146-amino-acid chain: uncharacterized protein (146 aa).

This is an uncharacterized protein from Orgyia pseudotsugata (Douglas-fir tussock moth).